A 266-amino-acid polypeptide reads, in one-letter code: Calpain small subunit 1 (266 aa).

Methionine 1 bears the N-acetylmethionine mark. At serine 6 the chain carries Phosphoserine. The EF-hand 1; atypical domain occupies glutamate 94 to arginine 128. Ca(2+) is bound by residues alanine 107, aspartate 110, glutamate 112, glutamate 117, aspartate 135, aspartate 150, aspartate 152, threonine 154, lysine 156, and glutamate 161. 4 consecutive EF-hand domains span residues phenylalanine 137–lysine 170, asparagine 167–histidine 202, leucine 203–leucine 231, and valine 232–serine 266. Lysine 177 carries the post-translational modification N6-acetyllysine. Residues aspartate 180, aspartate 182, serine 184, threonine 186, glutamate 191, and aspartate 223 each contribute to the Ca(2+) site.

In terms of assembly, homodimer or heterodimer of a large (catalytic) and a small (regulatory) subunit. In presence of calcium, the heterodimer dissociates.

The protein resides in the cytoplasm. The protein localises to the cell membrane. In terms of biological role, regulatory subunit of the calcium-regulated non-lysosomal thiol-protease which catalyzes limited proteolysis of substrates involved in cytoskeletal remodeling and signal transduction. Essential for embryonic development. The protein is Calpain small subunit 1 (CAPNS1) of Sus scrofa (Pig).